The following is a 654-amino-acid chain: Macrolide export ATP-binding/permease protein MacB (654 aa).

The 239-residue stretch at 6-244 (LKVEDLTRRF…EQAAKTPSAS (239 aa)) folds into the ABC transporter domain. ATP is bound at residue 42-49 (GASGSGKS). The next 4 membrane-spanning stretches (helical) occupy residues 280–300 (FLTM…VALG), 529–549 (LLIS…VMNI), 584–604 (LVCL…GFAF), and 619–639 (SIIW…FLPA).

The protein belongs to the ABC transporter superfamily. Macrolide exporter (TC 3.A.1.122) family. Homodimer. Part of the tripartite efflux system MacAB-TolC, which is composed of an inner membrane transporter, MacB, a periplasmic membrane fusion protein, MacA, and an outer membrane component, TolC. The complex forms a large protein conduit and can translocate molecules across both the inner and outer membranes. Interacts with MacA.

Its subcellular location is the cell inner membrane. Functionally, part of the tripartite efflux system MacAB-TolC. MacB is a non-canonical ABC transporter that contains transmembrane domains (TMD), which form a pore in the inner membrane, and an ATP-binding domain (NBD), which is responsible for energy generation. Confers resistance against macrolides. The chain is Macrolide export ATP-binding/permease protein MacB from Vibrio parahaemolyticus serotype O3:K6 (strain RIMD 2210633).